The following is a 748-amino-acid chain: Subtilisin-like protease (748 aa).

Residues 1–24 form the signal peptide; sequence MMKMELRLLVSLIFILCSISMLAA. An Inhibitor I9 domain is found at 37-115; it reads TYIVHVKKSE…ARPERTLELH (79 aa). Positions 122–600 constitute a Peptidase S8 domain; it reads FLGLKQGQGL…AGHVNPVKAN (479 aa). Active-site charge relay system residues include D147 and H206. In terms of domain architecture, PA spans 365–454; the sequence is PLVYPGSFGY…VEVSYAAGLT (90 aa). N-linked (GlcNAc...) asparagine glycosylation is found at N376, N380, and N405. The active-site Charge relay system is the S533. 2 N-linked (GlcNAc...) asparagine glycosylation sites follow: N675 and N722.

The protein belongs to the peptidase S8 family.

The protein resides in the secreted. It is found in the extracellular space. Its subcellular location is the apoplast. Required for arbuscular mycorrhiza (AM) development during AM symbiosis with AM fungi (e.g. Glomeromycota intraradices). This is Subtilisin-like protease from Medicago truncatula (Barrel medic).